The chain runs to 1157 residues: Probable ATP-dependent RNA helicase DHX37 (1157 aa).

Residues 1-10 (MGKLRRRYNI) show a composition bias toward basic residues. Disordered stretches follow at residues 1 to 77 (MGKL…KKEK) and 116 to 225 (TSKL…AAPP). Over residues 21-30 (SKGPPEPPPV) the composition is skewed to pro residues. Residues 159 to 184 (AEEEEEEEEESESELEEESELDEDPA) show a composition bias toward acidic residues. 2 stretches are compositionally biased toward pro residues: residues 198 to 208 (PLPPAPAPSSQ) and 216 to 225 (VPPPPAAAPP). The Helicase ATP-binding domain maps to 262–429 (MEAVAEHPIV…PRLFAKPPPV (168 aa)). 275 to 282 (GETGSGKT) provides a ligand contact to ATP. The short motif at 372–375 (DEAH) is the DEAH box element. The region spanning 459–716 (KVCKIHRMLP…DLILQMKALN (258 aa)) is the Helicase C-terminal domain. Disordered stretches follow at residues 494-523 (PPSR…SRAR) and 542-584 (VLPA…QPDA). Over residues 499-515 (RPQEKDDDQKDSVEEMR) the composition is skewed to basic and acidic residues. A compositionally biased stretch (acidic residues) spans 547-571 (EGDEDREAEVDEEEGALDSDLDLDL).

This sequence belongs to the DEAD box helicase family. DEAH subfamily. In terms of assembly, part of the small subunit (SSU) processome, composed of more than 70 proteins and the RNA chaperone small nucleolar RNA (snoRNA) U3. Interacts with UTP14A. Expressed in the fallopian tube, ovary, uterus and testis. Also expressed in the brain.

It is found in the nucleus. Its subcellular location is the nucleolus. It localises to the cytoplasm. The protein resides in the nucleus membrane. It catalyses the reaction ATP + H2O = ADP + phosphate + H(+). Functionally, ATP-binding RNA helicase that plays a role in maturation of the small ribosomal subunit in ribosome biogenesis. Required for the release of the U3 snoRNP from pre-ribosomal particles. Part of the small subunit (SSU) processome, first precursor of the small eukaryotic ribosomal subunit. During the assembly of the SSU processome in the nucleolus, many ribosome biogenesis factors, an RNA chaperone and ribosomal proteins associate with the nascent pre-rRNA and work in concert to generate RNA folding, modifications, rearrangements and cleavage as well as targeted degradation of pre-ribosomal RNA by the RNA exosome. Plays a role in early testis development. Probably also plays a role in brain development. The chain is Probable ATP-dependent RNA helicase DHX37 from Homo sapiens (Human).